The following is a 108-amino-acid chain: Ig light chain C region (108 aa).

Residues 7-102 enclose the Ig-like domain; that stretch reads PTVSIYCPSL…LTPALAKSFQ (96 aa). 2 cysteine pairs are disulfide-bonded: Cys-13-Cys-106 and Cys-28-Cys-86.

The sequence is that of Ig light chain C region from Aquarana catesbeiana (American bullfrog).